The sequence spans 288 residues: L-xylulose reductase (288 aa).

I39, N113, and K147 together coordinate NADP(+). S181 serves as the catalytic Proton donor. NADP(+) is bound by residues Y196, K200, I228, and T230. Residue Y196 is the Proton acceptor of the active site. K200 (lowers pKa of active site Tyr) is an active-site residue.

It belongs to the short-chain dehydrogenases/reductases (SDR) family.

The enzyme catalyses xylitol + NADP(+) = L-xylulose + NADPH + H(+). It functions in the pathway carbohydrate degradation; L-arabinose degradation via L-arabinitol; D-xylulose 5-phosphate from L-arabinose (fungal route): step 3/5. Functionally, L-xylulose reductase involved in the catabolism of L-arabinose through an oxidoreductive pathway. Catalyzes the NADPH-dependent reduction of L-xylulose. Is also able to convert D-xylulose, D-ribulose, L-sorbose, and D-fructose to their corresponding polyols. The polypeptide is L-xylulose reductase (Hypocrea jecorina (strain QM6a) (Trichoderma reesei)).